The following is a 280-amino-acid chain: Large ribosomal subunit protein uL2 (280 aa).

Residues 215–280 form a disordered region; the sequence is GRRPHVRGSA…IQRANDKKEK (66 aa).

It belongs to the universal ribosomal protein uL2 family. Part of the 50S ribosomal subunit. Forms a bridge to the 30S subunit in the 70S ribosome.

Its function is as follows. One of the primary rRNA binding proteins. Required for association of the 30S and 50S subunits to form the 70S ribosome, for tRNA binding and peptide bond formation. It has been suggested to have peptidyltransferase activity; this is somewhat controversial. Makes several contacts with the 16S rRNA in the 70S ribosome. The sequence is that of Large ribosomal subunit protein uL2 from Dictyoglomus thermophilum (strain ATCC 35947 / DSM 3960 / H-6-12).